We begin with the raw amino-acid sequence, 379 residues long: Homoserine O-succinyltransferase (379 aa).

Residues 51-360 enclose the AB hydrolase-1 domain; sequence NAVLICHALS…DAPQGHDAFL (310 aa). The active-site Nucleophile is serine 157. Arginine 227 lines the substrate pocket. Residues aspartate 323 and histidine 356 contribute to the active site. Aspartate 357 provides a ligand contact to substrate.

Belongs to the AB hydrolase superfamily. MetX family. As to quaternary structure, homodimer.

The protein resides in the cytoplasm. The enzyme catalyses L-homoserine + succinyl-CoA = O-succinyl-L-homoserine + CoA. It participates in amino-acid biosynthesis; L-methionine biosynthesis via de novo pathway; O-succinyl-L-homoserine from L-homoserine: step 1/1. Transfers a succinyl group from succinyl-CoA to L-homoserine, forming succinyl-L-homoserine. The chain is Homoserine O-succinyltransferase from Pseudomonas paraeruginosa (strain DSM 24068 / PA7) (Pseudomonas aeruginosa (strain PA7)).